Reading from the N-terminus, the 65-residue chain is Putative beta-neurotoxin RjAa12 (65 aa).

The LCN-type CS-alpha/beta domain occupies 1–64; sequence KEGYPVGRDG…VWDSSTNKCG (64 aa). Disulfide bonds link C11-C63, C15-C37, C22-C44, and C26-C46.

Belongs to the long (4 C-C) scorpion toxin superfamily. Sodium channel inhibitor family. Beta subfamily. Expressed by the venom gland.

The protein localises to the secreted. Beta toxins bind voltage-independently at site-4 of sodium channels (Nav) and shift the voltage of activation toward more negative potentials thereby affecting sodium channel activation and promoting spontaneous and repetitive firing. This is Putative beta-neurotoxin RjAa12 from Rhopalurus junceus (Caribbean blue scorpion).